A 208-amino-acid chain; its full sequence is Protein-L-isoaspartate O-methyltransferase (208 aa).

The active site involves Ser-59.

This sequence belongs to the methyltransferase superfamily. L-isoaspartyl/D-aspartyl protein methyltransferase family.

The protein localises to the cytoplasm. The enzyme catalyses [protein]-L-isoaspartate + S-adenosyl-L-methionine = [protein]-L-isoaspartate alpha-methyl ester + S-adenosyl-L-homocysteine. Functionally, catalyzes the methyl esterification of L-isoaspartyl residues in peptides and proteins that result from spontaneous decomposition of normal L-aspartyl and L-asparaginyl residues. It plays a role in the repair and/or degradation of damaged proteins. The polypeptide is Protein-L-isoaspartate O-methyltransferase (Vibrio campbellii (strain ATCC BAA-1116)).